Consider the following 232-residue polypeptide: F420-dependent NADP reductase (232 aa).

NADP(+) is bound by residues 15–18, 37–38, Lys42, Val80, Val106, and Ala151; these read TGDQ and SR.

Belongs to the F420-dependent NADP reductase family. Homotetramer.

The catalysed reaction is reduced coenzyme F420-(gamma-L-Glu)(n) + NADP(+) = oxidized coenzyme F420-(gamma-L-Glu)(n) + NADPH + 2 H(+). In terms of biological role, catalyzes the reduction of NADP(+) with F420H(2) via hydride transfer, and likely the reverse reaction, i.e. the reduction of F420 with NADPH. Probably functions in the regeneration of NADPH required in biosynthetic reactions. Is specific for reduced F420 as electron donor for the reduction of NADP; neither reduced FAD nor FMN can act as electron donor. The enzyme is also specific for NADP; NAD is not utilized as substrate. This is F420-dependent NADP reductase (fno) from Methanothermobacter thermautotrophicus (strain ATCC 29096 / DSM 1053 / JCM 10044 / NBRC 100330 / Delta H) (Methanobacterium thermoautotrophicum).